The sequence spans 228 residues: Prolactin (228 aa).

An N-terminal signal peptide occupies residues 1 to 29 (MGTKRSSLKGSLLLLLLMSSLFLFKSVES). A disulfide bridge links Cys33 with Cys40. Phosphoserine occurs at positions 55, 63, and 119. Disulfide bonds link Cys87–Cys203 and Cys220–Cys228.

The protein belongs to the somatotropin/prolactin family. As to quaternary structure, interacts with PRLR.

It localises to the secreted. Prolactin acts primarily on the mammary gland by promoting lactation, mammogenesis, mitogenesis and osmoregulation. This is Prolactin (PRL) from Trichosurus vulpecula (Brush-tailed possum).